The primary structure comprises 200 residues: Ciliary microtubule inner protein 2C (200 aa).

It belongs to the CIMIP2 family. As to quaternary structure, microtubule inner protein component of sperm flagellar doublet microtubules.

The protein resides in the cytoplasm. It localises to the cytoskeleton. The protein localises to the cilium axoneme. It is found in the flagellum axoneme. Microtubule inner protein (MIP) part of the dynein-decorated doublet microtubules (DMTs) in cilia axoneme, which is required for motile cilia beating. Binds to the intra-tubulin interfaces. The polypeptide is Ciliary microtubule inner protein 2C (Cimip2c) (Mus musculus (Mouse)).